Here is a 425-residue protein sequence, read N- to C-terminus: Putative type I restriction enzyme MjaX specificity subunit (425 aa).

The protein belongs to the type-I restriction system S methylase family.

A putative specificity (S) subunit of a type I restriction enzyme thought to recognize 5'-TAGN(6)TGC-3'; the other subunits are unknown. This chain is Putative type I restriction enzyme MjaX specificity subunit, found in Methanocaldococcus jannaschii (strain ATCC 43067 / DSM 2661 / JAL-1 / JCM 10045 / NBRC 100440) (Methanococcus jannaschii).